A 922-amino-acid polypeptide reads, in one-letter code: Chaperone protein ClpC, chloroplastic (922 aa).

Residues 1 to 72 constitute a chloroplast transit peptide; it reads MARVLAQSLS…RPGLDFHSKV (72 aa). A Clp R domain is found at 92 to 234; the sequence is FERFTEKAIK…RTQVIRMVGE (143 aa). Repeat regions lie at residues 95 to 160 and 170 to 234; these read FTEK…IGRG and FTPR…MVGE. The tract at residues 255 to 502 is i; it reads LEEYGTNLTK…RVRLQHAQLP (248 aa). An ATP-binding site is contributed by 300-307; that stretch reads GEPGVGKT. The UVR domain maps to 509–544; sequence DKEVRKIVKEKEEYVRNQDFEKAGELRDKEMDLKAQ. An II region spans residues 569–760; sequence VTEVDIQHIV…LLIMTSNVGS (192 aa). 643-650 is an ATP binding site; it reads GPTGVGKS.

It belongs to the ClpA/ClpB family. ClpC subfamily.

It localises to the plastid. It is found in the chloroplast. In terms of biological role, molecular chaperone that may interact with a ClpP-like protease involved in degradation of denatured proteins in the chloroplast. The polypeptide is Chaperone protein ClpC, chloroplastic (Pisum sativum (Garden pea)).